Consider the following 340-residue polypeptide: Glyceraldehyde-3-phosphate dehydrogenase (340 aa).

Residues 11–12 (SI) and G111 each bind NAD(+). 140–142 (SCN) is a D-glyceraldehyde 3-phosphate binding site. Catalysis depends on C141, which acts as the Nucleophile. R169 lines the NAD(+) pocket. 195 to 196 (HG) provides a ligand contact to D-glyceraldehyde 3-phosphate. Q303 contacts NAD(+).

This sequence belongs to the glyceraldehyde-3-phosphate dehydrogenase family. As to quaternary structure, homotetramer.

The protein localises to the cytoplasm. It carries out the reaction D-glyceraldehyde 3-phosphate + phosphate + NADP(+) = (2R)-3-phospho-glyceroyl phosphate + NADPH + H(+). The catalysed reaction is D-glyceraldehyde 3-phosphate + phosphate + NAD(+) = (2R)-3-phospho-glyceroyl phosphate + NADH + H(+). It functions in the pathway carbohydrate degradation; glycolysis; pyruvate from D-glyceraldehyde 3-phosphate: step 1/5. The polypeptide is Glyceraldehyde-3-phosphate dehydrogenase (Methanococcus maripaludis (strain C5 / ATCC BAA-1333)).